Consider the following 149-residue polypeptide: Transcriptional repressor NrdR (149 aa).

A zinc finger lies at 3–34; it reads CPFCFAVDTKVIDSRLVGEGSSVRRRRQCLVC. The ATP-cone domain occupies 49-139; the sequence is PRVVKSNDVR…VYRSFEDIRE (91 aa).

Belongs to the NrdR family. Zn(2+) is required as a cofactor.

Functionally, negatively regulates transcription of bacterial ribonucleotide reductase nrd genes and operons by binding to NrdR-boxes. The chain is Transcriptional repressor NrdR from Cronobacter sakazakii (strain ATCC BAA-894) (Enterobacter sakazakii).